The following is a 512-amino-acid chain: Glutathione-binding protein GsiB (512 aa).

The N-terminal stretch at 1-26 (MARAVHRSGLVALGIATALMASCAFA) is a signal peptide.

This sequence belongs to the bacterial solute-binding protein 5 family. The complex is composed of two ATP-binding proteins (GsiA), two transmembrane proteins (GsiC and GsiD) and a solute-binding protein (GsiB).

Its subcellular location is the periplasm. In terms of biological role, part of the ABC transporter complex GsiABCD involved in glutathione import. Binds glutathione. This chain is Glutathione-binding protein GsiB, found in Escherichia coli O157:H7.